Here is a 4080-residue protein sequence, read N- to C-terminus: Hybrid PKS-NRPS synthetase poxE (4080 aa).

A Ketosynthase family 3 (KS3) domain is found at 8-442 (REPIAIVGSG…GTNAHAIIEA (435 aa)). Residues Cys181, His320, and His362 each act as for beta-ketoacyl synthase activity in the active site. Residues 554-878 (VFTGQGAQWA…QRGMNDVEAM (325 aa)) form a malonyl-CoA:ACP transacylase (MAT) domain region. Residues 944 to 1078 (HPILGTRCPD…GRLVITYGPV (135 aa)) form an N-terminal hotdog fold region. The 303-residue stretch at 944–1246 (HPILGTRCPD…AVPLEATNAD (303 aa)) folds into the PKS/mFAS DH domain. Residues 945-1243 (PILGTRCPDG…GIHAVPLEAT (299 aa)) form a dehydratase (DH) domain region. His976 (proton acceptor; for dehydratase activity) is an active-site residue. The tract at residues 1093 to 1246 (MVDVPSERFY…AVPLEATNAD (154 aa)) is C-terminal hotdog fold. Asp1152 functions as the Proton donor; for dehydratase activity in the catalytic mechanism. The methyltransferase (MT) domain stretch occupies residues 1400 to 1585 (HFSDYLASVV…GVDTFTSDAD (186 aa)). Residues 2118–2292 (TYWLVGLTGS…AGSVMNIGAI (175 aa)) are ketoreductase (KR)domain. A peptidyl carrier protein region spans residues 2399-2478 (TTDEIYEVIK…TIGEIIKFVL (80 aa)). The 77-residue stretch at 2405-2481 (EVIKECFIVK…EIIKFVLEKL (77 aa)) folds into the Carrier 1 domain. Ser2441 is subject to O-(pantetheine 4'-phosphoryl)serine. Positions 2488–2569 (SLGLSPPTGA…AASPSIHTEE (82 aa)) are disordered. Residues 2511–2525 (VVVERRNVPRLEKKI) show a composition bias toward basic and acidic residues. Low complexity predominate over residues 2528 to 2545 (SAGSRTSSSVTGTSKSVS). The segment covering 2551-2565 (DTASSQTSEAASPSI) has biased composition (polar residues). Residues 2607 to 3036 (KEPLSFGQSR…DSKQPGGHVS (430 aa)) are condensation. Residues 3069-3478 (DMAKQYPQKL…DGRLRIEGRI (410 aa)) are adenylation. The region spanning 3593 to 3673 (AHLNEAQAQM…KMALLIKPQE (81 aa)) is the Carrier 2 domain. The tract at residues 3598–3670 (AQAQMVQLWE…TLEKMALLIK (73 aa)) is thiolation. Position 3633 is an O-(pantetheine 4'-phosphoryl)serine (Ser3633). The interval 3740 to 3959 (LTGATGFIGQ…DFVPVEQVVR (220 aa)) is reductase (RED) domain.

The protein in the C-terminal section; belongs to the NRP synthetase family.

It participates in secondary metabolite biosynthesis. Its function is as follows. Hybrid PKS-NRPS synthetase; part of the gene cluster that mediates the biosynthesis of oxaleimides, cytotoxic compounds containing an unusual disubstituted succinimide moiety. The first step of the pathway is provided by the HR-PKS poxF that serves in a new mode of collaborative biosynthesis with the PKS-NRPS poxE, by providing the olefin containing amino acid substrate via the synthesis of an ACP-bound dec-4-enoate. The cytochrome P450 monooxygenase poxM-catalyzed oxidation at the alpha-position creates the enzyme-bound 2-hydroxydec-4-enoyl-ACP thioester, which may be prone to spontaneous hydrolysis to yield 2-hydroxydec-4-enoic acid due to increased electrophilicity of the carbonyl. 2-hydroxydec-4-enoic acid can then be further oxidized by poxM to yield the alpha-ketoacid 2-oxodec-4-enoicacid, which is reductively aminated by the aminotransferase poxL to yield (S,E)-2-aminodec-4-enoic acid. The Hybrid PKS-NRPS synthetase poxE then performs condensation between the octaketide product of its PKS modules and the amino group of (S,E)-2-aminodec-4-enoic acid which is activated and incorporated by the adenylation domain. The resulting aminoacyl product can be cyclized by the Diels-Alderase PoxQ and reductively released by the reductive (R) domain of poxE to yield an aldehyde intermediate. The released aldehyde is then substrate for a Knoevenagel condensation by the hydrolyase poxO followed by an oxidation at the 5-position of the pyrrolidone ring. The presence of the olefin from the amino acid building block allows for migration of the substituted allyl group to occur. This allylic transposition reaction takes place in a conjugate addition, semipinacol-like fashion to yield a succinimide intermediate. Iterative two-electron oxidations of the C7 methyl of the succinimide intermediate to the carboxylic acid can be catalyzed by one of two remaining cytochrome P450 monooxygenasess poxC or poxD to yield oxaleimide A. Subsequent oxidation yields the maleimide scaffold oxaleimide I. Both oxaleimide A and oxaleimide I can undergo oxidative modifications in the decalin ring to yield the series of products oxaleimides B to H. The protein is Hybrid PKS-NRPS synthetase poxE of Penicillium oxalicum (strain 114-2 / CGMCC 5302) (Penicillium decumbens).